We begin with the raw amino-acid sequence, 447 residues long: MTTILKHLPVGQRIGIAFSGGLDTSAALLWMRQKGAVPYAYTANLGQPDEEDYDAIPRRAMEYGAENARLIDCRKQLVAEGIAAIQCGAFHNTTGGLTYFNTTPLGRAVTGTMLVAAMKEDGVNIWGDGSTYKGNDIERFYRYGLLTNAELQIYKPWLDTDFIDELGGRHEMSEFMIACGFDYKMSVEKAYSTDSNMLGATHEAKDLEYLNSSVKIVNPIMGVKFWDESVKIPAEEVTVRFEQGHPVALNGKTFSDDVEMMLEANRIGGRHGLGMSDQIENRIIEAKSRGIYEAPGMALLHIAYERLLTGIHNEDTIEQYHAHGRQLGRLLYQGRWFDSQALMLRDSLQRWVASQITGEVTLELRRGNDYSILNTVSENLTYKPERLTMEKGDSVFSPDDRIGQLTMRNLDITDTREKLFGYAKTGLLSSSATSGVPQVENMENKGQ.

Residues 17 to 25 (AFSGGLDTS) and A43 each bind ATP. Y99 contributes to the L-citrulline binding site. The ATP site is built by G129 and T131. Positions 131, 135, and 136 each coordinate L-aspartate. N135 provides a ligand contact to L-citrulline. An ATP-binding site is contributed by D136. L-citrulline contacts are provided by R139 and S192. D194 provides a ligand contact to ATP. Residues T201, E203, and E280 each contribute to the L-citrulline site.

Belongs to the argininosuccinate synthase family. Type 2 subfamily. Homotetramer.

The protein localises to the cytoplasm. It carries out the reaction L-citrulline + L-aspartate + ATP = 2-(N(omega)-L-arginino)succinate + AMP + diphosphate + H(+). It participates in amino-acid biosynthesis; L-arginine biosynthesis; L-arginine from L-ornithine and carbamoyl phosphate: step 2/3. This chain is Argininosuccinate synthase, found in Escherichia coli O139:H28 (strain E24377A / ETEC).